The following is a 238-amino-acid chain: ATP synthase subunit O, mitochondrial (238 aa).

The N-terminal 36 residues, 1 to 36, are a transit peptide targeting the mitochondrion; sequence MANRFRSGISFFKTIAVTDSVSSVRSKSLFPALRTY. Residue Thr90 is modified to Phosphothreonine.

It belongs to the ATPase delta chain family. F-type ATPases have 2 components, CF(1) - the catalytic core - and CF(0) - the membrane proton channel. CF(1) has five subunits: alpha(3), beta(3), gamma(1), delta(1), epsilon(1). CF(0) has three main subunits: a, b and c.

It is found in the mitochondrion. The protein resides in the mitochondrion inner membrane. Mitochondrial membrane ATP synthase (F(1)F(0) ATP synthase or Complex V) produces ATP from ADP in the presence of a proton gradient across the membrane which is generated by electron transport complexes of the respiratory chain. F-type ATPases consist of two structural domains, F(1) - containing the extramembraneous catalytic core and F(0) - containing the membrane proton channel, linked together by a central stalk and a peripheral stalk. During catalysis, ATP synthesis in the catalytic domain of F(1) is coupled via a rotary mechanism of the central stalk subunits to proton translocation. Part of the complex F(0) domain and the peripheric stalk, which acts as a stator to hold the catalytic alpha(3)beta(3) subcomplex and subunit a/ATP6 static relative to the rotary elements. The protein is ATP synthase subunit O, mitochondrial of Arabidopsis thaliana (Mouse-ear cress).